The following is a 291-amino-acid chain: UDP-N-acetylenolpyruvoylglucosamine reductase (291 aa).

Residues 22–187 form the FAD-binding PCMH-type domain; that stretch reads RIGGPARYFK…ASATFQLTKD (166 aa). R166 is a catalytic residue. C214 serves as the catalytic Proton donor. The active site involves E283.

This sequence belongs to the MurB family. The cofactor is FAD.

The protein localises to the cytoplasm. The catalysed reaction is UDP-N-acetyl-alpha-D-muramate + NADP(+) = UDP-N-acetyl-3-O-(1-carboxyvinyl)-alpha-D-glucosamine + NADPH + H(+). It functions in the pathway cell wall biogenesis; peptidoglycan biosynthesis. Functionally, cell wall formation. The sequence is that of UDP-N-acetylenolpyruvoylglucosamine reductase from Chlamydia trachomatis serovar L2 (strain ATCC VR-902B / DSM 19102 / 434/Bu).